Here is a 635-residue protein sequence, read N- to C-terminus: Threonine--tRNA ligase (635 aa).

In terms of domain architecture, TGS spans 1-58; sequence MIRVICNNETVELPKGATAADFASKIKNSHYFAGVVINDQIKDLSTTLNEGDTLRFVT. The catalytic stretch occupies residues 237–528; that stretch reads DHRVLGAKLD…LIEHFKGKFP (292 aa). C328, H379, and H505 together coordinate Zn(2+).

This sequence belongs to the class-II aminoacyl-tRNA synthetase family. As to quaternary structure, homodimer. The cofactor is Zn(2+).

It localises to the cytoplasm. The enzyme catalyses tRNA(Thr) + L-threonine + ATP = L-threonyl-tRNA(Thr) + AMP + diphosphate + H(+). Its function is as follows. Catalyzes the attachment of threonine to tRNA(Thr) in a two-step reaction: L-threonine is first activated by ATP to form Thr-AMP and then transferred to the acceptor end of tRNA(Thr). Also edits incorrectly charged L-seryl-tRNA(Thr). This Chlamydia caviae (strain ATCC VR-813 / DSM 19441 / 03DC25 / GPIC) (Chlamydophila caviae) protein is Threonine--tRNA ligase.